The chain runs to 685 residues: Sorbicillinoid biosynthetic cluster transcription factor sor4 (685 aa).

Over residues 1-14 the composition is skewed to low complexity; the sequence is MGSSATATTTGEST. Residues 1–20 form a disordered region; that stretch reads MGSSATATTTGESTRQQPGL. Residues 22 to 49 constitute a DNA-binding region (zn(2)-C6 fungal-type); sequence CEECRRRKARCDRVRPKCGICADSGRNC. The disordered stretch occupies residues 81-112; the sequence is GQNDAPSLPQERDSLGCPTPSEKVSPEGDLVS.

Its subcellular location is the nucleus. Transcription factor that acts as the main regulator of the gene cluster that mediates the biosynthesis of sorbicillinoids, a diverse group of yellow secondary metabolites that restrict growth of competing pathogenic fungi but not of bacteria. This chain is Sorbicillinoid biosynthetic cluster transcription factor sor4, found in Hypocrea jecorina (strain QM6a) (Trichoderma reesei).